Reading from the N-terminus, the 658-residue chain is Threonine--tRNA ligase (658 aa).

The TGS domain occupies 1–64 (MSFSISLSFP…EQSGQVEIIT (64 aa)). Positions 246-549 (DHRRLGREMD…LIENFAGHMP (304 aa)) are catalytic. Residues cysteine 343, histidine 394, and histidine 526 each contribute to the Zn(2+) site.

This sequence belongs to the class-II aminoacyl-tRNA synthetase family. Homodimer. Requires Zn(2+) as cofactor.

Its subcellular location is the cytoplasm. It carries out the reaction tRNA(Thr) + L-threonine + ATP = L-threonyl-tRNA(Thr) + AMP + diphosphate + H(+). Catalyzes the attachment of threonine to tRNA(Thr) in a two-step reaction: L-threonine is first activated by ATP to form Thr-AMP and then transferred to the acceptor end of tRNA(Thr). Also edits incorrectly charged L-seryl-tRNA(Thr). In Bartonella bacilliformis (strain ATCC 35685 / KC583 / Herrer 020/F12,63), this protein is Threonine--tRNA ligase.